Here is a 373-residue protein sequence, read N- to C-terminus: Protein-glutamate methylesterase/protein-glutamine glutaminase 2 (373 aa).

One can recognise a Response regulatory domain in the interval 4 to 121 (KVLVVDDSGF…SRNPEKVKQL (118 aa)). The residue at position 55 (aspartate 55) is a 4-aspartylphosphate. Positions 136-181 (FSSYSAPAPQPASAPAPAPSSFASSRSPAPAPAPARAAAPAASANS) are disordered. Residues 143–153 (APQPASAPAPA) show a composition bias toward pro residues. A compositionally biased stretch (low complexity) spans 154–181 (PSSFASSRSPAPAPAPARAAAPAASANS). The 189-residue stretch at 182–370 (PAPKRKAYKL…LDDIGRHLVE (189 aa)) folds into the CheB-type methylesterase domain. Active-site residues include serine 197, histidine 224, and aspartate 317.

This sequence belongs to the CheB family. Post-translationally, phosphorylated by CheA. Phosphorylation of the N-terminal regulatory domain activates the methylesterase activity.

The protein resides in the cytoplasm. It carries out the reaction [protein]-L-glutamate 5-O-methyl ester + H2O = L-glutamyl-[protein] + methanol + H(+). The enzyme catalyses L-glutaminyl-[protein] + H2O = L-glutamyl-[protein] + NH4(+). Involved in chemotaxis. Part of a chemotaxis signal transduction system that modulates chemotaxis in response to various stimuli. Catalyzes the demethylation of specific methylglutamate residues introduced into the chemoreceptors (methyl-accepting chemotaxis proteins or MCP) by CheR. Also mediates the irreversible deamidation of specific glutamine residues to glutamic acid. The protein is Protein-glutamate methylesterase/protein-glutamine glutaminase 2 of Pseudomonas fluorescens (strain ATCC BAA-477 / NRRL B-23932 / Pf-5).